Here is a 291-residue protein sequence, read N- to C-terminus: Ribonuclease Z (291 aa).

Zn(2+) contacts are provided by H61, H63, D65, H66, H133, D201, and H257. Residue D65 is the Proton acceptor of the active site.

This sequence belongs to the RNase Z family. Homodimer. Zn(2+) is required as a cofactor.

The enzyme catalyses Endonucleolytic cleavage of RNA, removing extra 3' nucleotides from tRNA precursor, generating 3' termini of tRNAs. A 3'-hydroxy group is left at the tRNA terminus and a 5'-phosphoryl group is left at the trailer molecule.. Zinc phosphodiesterase, which displays some tRNA 3'-processing endonuclease activity. Probably involved in tRNA maturation, by removing a 3'-trailer from precursor tRNA. The protein is Ribonuclease Z of Saccharolobus solfataricus (strain ATCC 35092 / DSM 1617 / JCM 11322 / P2) (Sulfolobus solfataricus).